A 295-amino-acid chain; its full sequence is Methionine aminopeptidase (295 aa).

Position 62 (His62) interacts with substrate. 3 residues coordinate a divalent metal cation: Asp82, Asp93, and His153. A substrate-binding site is contributed by His161. A divalent metal cation is bound by residues Glu187 and Glu280.

In terms of assembly, monomer. The cofactor is Co(2+). It depends on Zn(2+) as a cofactor. Mn(2+) is required as a cofactor. Fe(2+) serves as cofactor.

The enzyme catalyses Release of N-terminal amino acids, preferentially methionine, from peptides and arylamides.. Removes the N-terminal methionine from nascent proteins. The N-terminal methionine is often cleaved when the second residue in the primary sequence is small and uncharged (Met-Ala-, Cys, Gly, Pro, Ser, Thr, or Val). This Pyrococcus furiosus (strain ATCC 43587 / DSM 3638 / JCM 8422 / Vc1) protein is Methionine aminopeptidase.